Reading from the N-terminus, the 79-residue chain is RVSSAVSSLVSSGPTTPAALSNTISSAVSQISASNPGLSGCDVLVQALLEVVSALVHILGSSSVGQINYGASAQYAQMV.

This sequence belongs to the silk fibroin family. As to quaternary structure, major subunit, with spidroin 2, of the dragline silk.

Its subcellular location is the secreted. It is found in the extracellular space. In terms of biological role, spiders' major ampullate silk possesses unique characteristics of strength and elasticity. Fibroin consists of pseudocrystalline regions of antiparallel beta-sheet interspersed with elastic amorphous segments. This Araneus bicentenarius (Giant lichen orbweaver) protein is Spidroin-1.